The sequence spans 501 residues: Acyl-CoA-binding domain-containing protein 5A (501 aa).

Residues 9–98 (YEQRFNAAVK…LKLILESMPV (90 aa)) enclose the ACB domain. An acyl-CoA contacts are provided by residues 20–29 (IQNLPPNGSF), 40–44 (YSYYK), K66, and Y85. The segment at 173-405 (IDLEDREDDD…GERWGADGPM (233 aa)) is disordered. Over residues 176–195 (EDREDDDDEDEEGERDEVEE) the composition is skewed to acidic residues. Residues 219–235 (SNGSISQHKGLSNGTHG) show a composition bias toward polar residues. Basic and acidic residues-rich tracts occupy residues 236–254 (SKSD…HMNH), 266–283 (NSEK…HVAS), and 328–366 (RSQD…KRSD). The segment covering 376 to 389 (SRSPASGSGSAGPQ) has biased composition (low complexity). Residues 406 to 437 (TENLNEQIICALARLQDDMQSVLQRLHTLEAL) are a coiled coil. A helical transmembrane segment spans residues 465–485 (WWPFDVSLGTVAFAVVWPFVV).

It belongs to the ATG37 family.

Its subcellular location is the membrane. Its function is as follows. Acyl-CoA binding protein which acts as the peroxisome receptor for pexophagy but is dispensable for aggrephagy and nonselective autophagy. Binds medium- and long-chain acyl-CoA esters. The chain is Acyl-CoA-binding domain-containing protein 5A (acbd5a) from Danio rerio (Zebrafish).